The sequence spans 458 residues: Pentatricopeptide repeat-containing protein At1g77405 (458 aa).

PPR repeat units lie at residues 164-198 (TTAS…HCKP), 199-233 (DVYA…GFRY), 236-271 (DTYT…NRMF), 282-316 (DVVT…GCVP), 317-351 (NQVT…GHGV), 353-387 (GSST…GLVP), and 388-419 (REYT…MREG).

This sequence belongs to the PPR family. P subfamily.

The polypeptide is Pentatricopeptide repeat-containing protein At1g77405 (Arabidopsis thaliana (Mouse-ear cress)).